A 398-amino-acid chain; its full sequence is Argininosuccinate synthase (398 aa).

Position 10–18 (10–18 (AYSGGLDTS)) interacts with ATP. Tyrosine 87 serves as a coordination point for L-citrulline. Residue glycine 117 participates in ATP binding. L-aspartate contacts are provided by threonine 119, asparagine 123, and aspartate 124. Asparagine 123 is a binding site for L-citrulline. The L-citrulline site is built by arginine 127, serine 175, glutamate 260, and tyrosine 272.

Belongs to the argininosuccinate synthase family. Type 1 subfamily. Homotetramer.

It localises to the cytoplasm. It catalyses the reaction L-citrulline + L-aspartate + ATP = 2-(N(omega)-L-arginino)succinate + AMP + diphosphate + H(+). It participates in amino-acid biosynthesis; L-arginine biosynthesis; L-arginine from L-ornithine and carbamoyl phosphate: step 2/3. The sequence is that of Argininosuccinate synthase from Lactococcus lactis subsp. lactis (strain IL1403) (Streptococcus lactis).